Here is a 49-residue protein sequence, read N- to C-terminus: Large ribosomal subunit protein bL33B (49 aa).

This sequence belongs to the bacterial ribosomal protein bL33 family.

The protein is Large ribosomal subunit protein bL33B of Exiguobacterium sibiricum (strain DSM 17290 / CCUG 55495 / CIP 109462 / JCM 13490 / 255-15).